The sequence spans 25 residues: Chrysophsin-2 (25 aa).

A Histidine amide modification is found at His-25.

Gill.

It localises to the secreted. Functionally, has antibacterial activity against Gram-positive bacteria B.subtilis ATCC 6633, L.garvieae ATCC 49156 and S.iniae F-8502, and Gram-negative bacteria E.coli WT-2, V.anguillarum ATCC 19264, V.penaeicida KHA, V.harveyi ATCC 14126, V.vulnificus ATCC 33148 and A.salmonicida NCMB 1102. Has hemolytic activity against human red blood cells. Seems to disrupt the membranes by adopting an alpha helical conformation. May play a significant role in innate host defense. This is Chrysophsin-2 from Pagrus major (Red sea bream).